The following is a 667-amino-acid chain: Gamma-tubulin complex component 4 (667 aa).

The disordered stretch occupies residues 425-445 (HKADATQAREGPSRETSPREA).

This sequence belongs to the TUBGCP family. Component of the gamma-tubulin ring complex (gTuRC) consisting of TUBGCP2, TUBGCP3, TUBGCP4, TUBGCP5 and TUBGCP6 and gamma-tubulin TUBG1 or TUBG2. TUBGCP2, TUBGCP3, TUBGCP4, TUBGCP5 and TUBGCP6 assemble in a 5:5:2:1:1 stoichiometry; each is associated with a gamma-tubulin, thereby arranging 14 gamma-tubulins in a helical manner. Gamma-tubulin at the first position is blocked by TUBGCP3 at the last position, allowing 13 protafilaments to grow into a microtubule. The gTuRC (via TUBGCP3 and TUBGCP6) interacts with ACTB and MZT1; the interactions form a luminal bridge that stabilizes the initial structure during complex assembly. The gTuRC (via TUBGCP2) interacts with MZT2A/MZT2B and CDK5RAP2 (via CM1 motif); the interactions play a role in gTuRC activation. Interacts with NINL. Interacts with ATF5; the ATF5:PCNT:polyglutamylated tubulin (PGT) tripartite unites the mother centriole and the pericentriolar material (PCM) in the centrosome. In terms of tissue distribution, ubiquitously expressed.

Its subcellular location is the cytoplasm. The protein localises to the cytoskeleton. It is found in the microtubule organizing center. It localises to the centrosome. Component of the gamma-tubulin ring complex (gTuRC) which mediates microtubule nucleation. The gTuRC regulates the minus-end nucleation of alpha-beta tubulin heterodimers that grow into microtubule protafilaments, a critical step in centrosome duplication and spindle formation. The chain is Gamma-tubulin complex component 4 (TUBGCP4) from Homo sapiens (Human).